The following is a 120-amino-acid chain: Large ribosomal subunit protein bL20 (120 aa).

The protein belongs to the bacterial ribosomal protein bL20 family.

Binds directly to 23S ribosomal RNA and is necessary for the in vitro assembly process of the 50S ribosomal subunit. It is not involved in the protein synthesizing functions of that subunit. This Desulfitobacterium hafniense (strain DSM 10664 / DCB-2) protein is Large ribosomal subunit protein bL20.